The sequence spans 192 residues: MIAIIVQTLLISVSVAMDAFAVSIGKGLTVSRVRPGDAVRSALWFGGSQALFLILGHYAASAFSAYVTAFDHWIIFGLLAFIGGNMVHEAYEEDAENAKETAQFDWKHMLPLAVACSIDAFAVGVSLAFMATSVPFAILCISVVTGLFSAAGLYIGRAFGAHWQKPAQIAGGVVLILIGVKVLLEHLGVIAF.

Helical transmembrane passes span 2 to 22 (IAIIVQTLLISVSVAMDAFAV), 41 to 61 (SALWFGGSQALFLILGHYAAS), 62 to 82 (AFSAYVTAFDHWIIFGLLAFI), 109 to 129 (MLPLAVACSIDAFAVGVSLAF), 136 to 156 (FAILCISVVTGLFSAAGLYIG), and 172 to 192 (GVVLILIGVKVLLEHLGVIAF).

The protein belongs to the MntP (TC 9.B.29) family.

Its subcellular location is the cell membrane. Probably functions as a manganese efflux pump. The protein is Putative manganese efflux pump MntP of Bifidobacterium longum subsp. infantis (strain ATCC 15697 / DSM 20088 / JCM 1222 / NCTC 11817 / S12).